The primary structure comprises 405 residues: Indoleamine 2,3-dioxygenase acdA (405 aa).

His312 is a heme binding site.

It belongs to the indoleamine 2,3-dioxygenase family. The cofactor is heme.

The catalysed reaction is L-tryptophan + O2 = N-formyl-L-kynurenine. It functions in the pathway secondary metabolite biosynthesis. Functionally, indoleamine 2,3-dioxygenase; part of the gene cluster that mediates the biosynthesis of aspcandine, a pyrrolobenzazepine alkaloid. Initially, the indoleamine 2,3-dioxygenase acdA accepts L-tryptophan and performs the oxidative opening of the indole ring to yield N'-formyl-L-kynurenine, which undergoes the spontaneous deformylation reaction to provide L-kynurenine. The kynurenine 3-monooxygenase acdD then hydroxylates L-kynurenine to afford 3-hydroxy-L-kynurenine. 3-hydroxy-L-kynurenine is activated by the A domain of the NRPS-PKS acdB and subsequently loaded onto the enzyme. The KS domain conducts the decarboxylative condensation of the 3-hydroxy-L-kynurenyl and malonyl moieties, and subsequent nucleophilic attacks by the two amino groups would occur nonenzymatically at two distinct positions, achieving the chain release and the construction of the tricyclic system. Finally, a dehydration reaction completes the biosynthesis to yield aspcandine. The chain is Indoleamine 2,3-dioxygenase acdA from Aspergillus candidus.